The following is a 276-amino-acid chain: MTTWYFLNSGKCSPSFNMALDEALLDWHSEGLIPPVIRFYEWEPATLSIGYFQQAKKDINLDAVREQGLGFVRRPTGGRAVLHEHELTYSVIVTESYPDMPESVTEAYRVLSEGILQGFHNLGMDAYFSVPDTEEKRADLKSPKSAVCFDAPSWYELVVEGKKIAGSAQTRQKGVILQHGAILLDLDQEKLLSVFNFSSEEAKDRMRRKLPEKAVAINSLVDEPVTVEQCVTAFRDGFAKSLQIELKPFTLSEEQLEYVRALEEKKYACDEWNFKK.

One can recognise a BPL/LPL catalytic domain in the interval 31 to 246 (GLIPPVIRFY…GFAKSLQIEL (216 aa)). Cys-148 serves as the catalytic Acyl-thioester intermediate.

This sequence belongs to the octanoyltransferase LipM family. As to quaternary structure, monomer.

It carries out the reaction octanoyl-[ACP] + L-lysyl-[protein] = N(6)-octanoyl-L-lysyl-[protein] + holo-[ACP] + H(+). It functions in the pathway protein modification; protein lipoylation via endogenous pathway; protein N(6)-(lipoyl)lysine from octanoyl-[acyl-carrier-protein]. In terms of biological role, catalyzes the transfer of endogenously produced octanoic acid from octanoyl-acyl-carrier-protein onto the lipoyl domain of GcvH, an intermediate carrier during protein lipoylation. This is Octanoyltransferase LipM from Lysinibacillus sphaericus (strain C3-41).